The chain runs to 191 residues: Inosine triphosphate pyrophosphatase (191 aa).

12–17 (TGNANK) contributes to the ITP binding site. A Mg(2+)-binding site is contributed by glutamate 42. ITP contacts are provided by residues lysine 54, 70 to 71 (DT), lysine 87, 145 to 148 (FGWD), lysine 168, and 173 to 174 (HR).

The protein belongs to the HAM1 NTPase family. In terms of assembly, homodimer. Mg(2+) is required as a cofactor. Requires Mn(2+) as cofactor.

The protein localises to the cytoplasm. It catalyses the reaction ITP + H2O = IMP + diphosphate + H(+). It carries out the reaction dITP + H2O = dIMP + diphosphate + H(+). The enzyme catalyses XTP + H2O = XMP + diphosphate + H(+). Pyrophosphatase that hydrolyzes non-canonical purine nucleotides such as inosine triphosphate (ITP), deoxyinosine triphosphate (dITP) or xanthosine 5'-triphosphate (XTP) to their respective monophosphate derivatives. The enzyme does not distinguish between the deoxy- and ribose forms. Probably excludes non-canonical purines from RNA and DNA precursor pools, thus preventing their incorporation into RNA and DNA and avoiding chromosomal lesions. The polypeptide is Inosine triphosphate pyrophosphatase (Phytophthora infestans (strain T30-4) (Potato late blight agent)).